We begin with the raw amino-acid sequence, 644 residues long: Exoribonuclease 2 (644 aa).

Residues 189 to 516 (RQDLTALNFV…NHRLLKAVIK (328 aa)) enclose the RNB domain. One can recognise an S1 motif domain in the interval 561 to 643 (NTRFAAEIID…ETRSIIARPA (83 aa)).

It belongs to the RNR ribonuclease family. RNase II subfamily.

The protein resides in the cytoplasm. The catalysed reaction is Exonucleolytic cleavage in the 3'- to 5'-direction to yield nucleoside 5'-phosphates.. Its function is as follows. Involved in mRNA degradation. Hydrolyzes single-stranded polyribonucleotides processively in the 3' to 5' direction. The protein is Exoribonuclease 2 of Salmonella gallinarum (strain 287/91 / NCTC 13346).